Consider the following 215-residue polypeptide: Thymidylate kinase (215 aa).

Residue 13–20 participates in ATP binding; it reads GLEGAGKS.

This sequence belongs to the thymidylate kinase family.

It catalyses the reaction dTMP + ATP = dTDP + ADP. Functionally, phosphorylation of dTMP to form dTDP in both de novo and salvage pathways of dTTP synthesis. The polypeptide is Thymidylate kinase (Shewanella frigidimarina (strain NCIMB 400)).